The sequence spans 203 residues: Small ribosomal subunit protein uS4 (203 aa).

The 62-residue stretch at 93–154 folds into the S4 RNA-binding domain; it reads RRFDNVVFRA…KSKNMDAVTE (62 aa).

It belongs to the universal ribosomal protein uS4 family. In terms of assembly, part of the 30S ribosomal subunit. Contacts protein S5. The interaction surface between S4 and S5 is involved in control of translational fidelity.

Its function is as follows. One of the primary rRNA binding proteins, it binds directly to 16S rRNA where it nucleates assembly of the body of the 30S subunit. In terms of biological role, with S5 and S12 plays an important role in translational accuracy. This is Small ribosomal subunit protein uS4 from Prosthecochloris aestuarii (strain DSM 271 / SK 413).